A 436-amino-acid polypeptide reads, in one-letter code: Adenosylhomocysteinase (436 aa).

Positions 62, 136, and 161 each coordinate substrate. 162–164 (TTT) is an NAD(+) binding site. 2 residues coordinate substrate: lysine 191 and aspartate 195. NAD(+) contacts are provided by residues asparagine 196, 225–230 (GFGDVG), glutamate 248, asparagine 283, 304–306 (IGH), and asparagine 352.

This sequence belongs to the adenosylhomocysteinase family. Requires NAD(+) as cofactor.

The protein resides in the cytoplasm. It carries out the reaction S-adenosyl-L-homocysteine + H2O = L-homocysteine + adenosine. It participates in amino-acid biosynthesis; L-homocysteine biosynthesis; L-homocysteine from S-adenosyl-L-homocysteine: step 1/1. Its function is as follows. May play a key role in the regulation of the intracellular concentration of adenosylhomocysteine. The chain is Adenosylhomocysteinase from Leptospira borgpetersenii serovar Hardjo-bovis (strain JB197).